The primary structure comprises 521 residues: Cytochrome P450 1A1 (521 aa).

Phenylalanine 229 contributes to the substrate binding site. Residue cysteine 463 participates in heme binding.

The protein belongs to the cytochrome P450 family. Requires heme as cofactor.

It is found in the endoplasmic reticulum membrane. It localises to the microsome membrane. It carries out the reaction an organic molecule + reduced [NADPH--hemoprotein reductase] + O2 = an alcohol + oxidized [NADPH--hemoprotein reductase] + H2O + H(+). Functionally, cytochromes P450 are a group of heme-thiolate monooxygenases. They oxidize a variety of structurally unrelated compounds, including steroids, fatty acids, and xenobiotics. The chain is Cytochrome P450 1A1 (cyp1a1) from Limanda limanda (Common dab).